The chain runs to 447 residues: MANSITADEIREQFSQAMSAMYQQEVPQYGTLLELVADVNLAVLENNPQLHEKMVNADELARLNVERHGAIRVGTAQELATLRRMFAIMGMYPVSYYDLSQAGVPVHSTAFRPIDDASLARNPFRVFTSLLRLELIENEILRQKAAEILRQRDIFTPRCRQLLEEYEQQGGFNETQAQEFVQEALETFRWHQLATVDEETYRALHNEHRLIADVVCFPGCHINHLTPRTLDIDRVQSMMPECGIEPKILIEGPPRREVPILLRQTSFKALEETVLFAGQKQGTHTARFGEIEQRGVALTPKGRQLYDDLLRNAGTGQDNLTHQMHLQETFRTFPDSEFLMRQQGLAWFRYRLTPSGEAHRQAIHPGDDPQPLIERGWVVAQPITYEDFLPVSAAGIFQSNLGNETQTRSHGNASREAFEQALGCPVLDEFQLYQEAEERSKRRCGLL.

2-oxoadipate-binding residues include His-68, Arg-72, and His-224. Position 68 (His-68) interacts with Fe(2+). His-224 and Glu-290 together coordinate Fe(2+). Val-391 lines the 2-oxoadipate pocket.

The protein belongs to the 2-oxoadipate dioxygenase/decarboxylase family. Fe(2+) serves as cofactor.

The catalysed reaction is 2-oxoadipate + O2 = (R)-2-hydroxyglutarate + CO2. Functionally, catalyzes the decarboxylation and hydroxylation of 2-oxoadipate (2OA) to form D-2-hydroxyglutarate (D-2-HGA). This chain is 2-oxoadipate dioxygenase/decarboxylase, found in Shigella flexneri.